Reading from the N-terminus, the 134-residue chain is Small ribosomal subunit protein uS9 (134 aa).

Residues Asp109–Arg134 are disordered. Over residues Pro118–Arg134 the composition is skewed to basic residues.

The protein belongs to the universal ribosomal protein uS9 family.

The polypeptide is Small ribosomal subunit protein uS9 (Methanococcus aeolicus (strain ATCC BAA-1280 / DSM 17508 / OCM 812 / Nankai-3)).